A 151-amino-acid chain; its full sequence is Large ribosomal subunit protein bL9 (151 aa).

The protein belongs to the bacterial ribosomal protein bL9 family.

Functionally, binds to the 23S rRNA. This is Large ribosomal subunit protein bL9 from Kosmotoga olearia (strain ATCC BAA-1733 / DSM 21960 / TBF 19.5.1).